Reading from the N-terminus, the 368-residue chain is Peptide chain release factor 2 (368 aa).

Q250 bears the N5-methylglutamine mark.

Belongs to the prokaryotic/mitochondrial release factor family. Post-translationally, methylated by PrmC. Methylation increases the termination efficiency of RF2.

It is found in the cytoplasm. Peptide chain release factor 2 directs the termination of translation in response to the peptide chain termination codons UGA and UAA. This Rickettsia africae (strain ESF-5) protein is Peptide chain release factor 2.